Consider the following 351-residue polypeptide: Phosphate acyltransferase (351 aa).

The protein belongs to the PlsX family. As to quaternary structure, homodimer. Probably interacts with PlsY.

It is found in the cytoplasm. The catalysed reaction is a fatty acyl-[ACP] + phosphate = an acyl phosphate + holo-[ACP]. It functions in the pathway lipid metabolism; phospholipid metabolism. Functionally, catalyzes the reversible formation of acyl-phosphate (acyl-PO(4)) from acyl-[acyl-carrier-protein] (acyl-ACP). This enzyme utilizes acyl-ACP as fatty acyl donor, but not acyl-CoA. The protein is Phosphate acyltransferase of Verminephrobacter eiseniae (strain EF01-2).